A 189-amino-acid chain; its full sequence is UPF0301 protein PST_3956 (189 aa).

The protein belongs to the UPF0301 (AlgH) family.

The polypeptide is UPF0301 protein PST_3956 (Stutzerimonas stutzeri (strain A1501) (Pseudomonas stutzeri)).